A 1012-amino-acid polypeptide reads, in one-letter code: Vacuolar membrane protease (1012 aa).

The Cytoplasmic portion of the chain corresponds to 1 to 60; sequence MRRSTDPRNLLVRRGPLLVDGESAISELDPGFFPTGDAPKMSSTTRRRFNLIAFTPGPVT. Residues 61-81 traverse the membrane as a helical segment; it reads VISSLVYLALLIPLLLVHTIV. Over 82-432 the chain is Vacuolar; the sequence is PSAPKSNPKG…SFAVFRLHTL (351 aa). Residue Asn-159 is glycosylated (N-linked (GlcNAc...) asparagine). Zn(2+) is bound by residues His-215 and Asp-227. Catalysis depends on Glu-261, which acts as the Proton acceptor. Residues Glu-262, Glu-287, and His-360 each coordinate Zn(2+). A helical membrane pass occupies residues 433 to 453; it reads FAISVTLLVVCPIVLFVIGII. At 454–487 the chain is on the cytoplasmic side; the sequence is LSKMDKMYLFSIHETIPETKEKVSVRGLRGLFRY. A helical membrane pass occupies residues 488 to 508; it reads PIILVVSSGILIGLSYLLAKV. Residues 509 to 518 are Vacuolar-facing; that stretch reads NPFIVHSSSY. Residues 519-539 form a helical membrane-spanning segment; it reads AVWSMMLSSWIFMTWFLSCIA. The Cytoplasmic segment spans residues 540–550; that stretch reads DFFRPSALHRA. The helical transmembrane segment at 551–571 threads the bilayer; it reads YTFTWQLLVMWVLLVISTVYV. Over 572-575 the chain is Vacuolar; the sequence is NQHD. Residues 576 to 596 form a helical membrane-spanning segment; it reads IAAGYFIVFYFAGTFLATLIS. Residues 597–710 lie on the Cytoplasmic side of the membrane; the sequence is YLELFALPNK…WSASLPTWTW (114 aa). A compositionally biased stretch (polar residues) spans 614–629; it reads SQYPSRLGSNRSSRIL. The interval 614 to 660 is disordered; the sequence is SQYPSRLGSNRSSRILSPSADELPTGGDNNGEIYDGEEEPTESSSLL. The chain crosses the membrane as a helical span at residues 711 to 731; sequence VLQFLFVGPVVIMFIGQLGLF. At 732 to 743 the chain is on the vacuolar side; the sequence is LTSAMNQVGADG. The chain crosses the membrane as a helical span at residues 744–764; that stretch reads VGLLVVYIAIAVFSVLLLIPL. At 765–777 the chain is on the cytoplasmic side; sequence SPFIHRFTYHVPT. Residues 778–798 traverse the membrane as a helical segment; sequence FLLLVFIATLIYNLAAFPFSA. Over 799–1012 the chain is Vacuolar; sequence ENRLKIFFVQ…DGLVEVSRGF (214 aa). N-linked (GlcNAc...) asparagine glycans are attached at residues Asn-842 and Asn-878.

Belongs to the peptidase M28 family. It depends on Zn(2+) as a cofactor.

The protein resides in the vacuole membrane. In terms of biological role, may be involved in vacuolar sorting and osmoregulation. The polypeptide is Vacuolar membrane protease (Coccidioides posadasii (strain RMSCC 757 / Silveira) (Valley fever fungus)).